Consider the following 121-residue polypeptide: MTRRNDKSNPRLAELIRLLKQTSRENEVEIWSDIASRLEKSRKNYAEVNVSKINRYAQEGETLIVPGKVLGSGVVEAGVTVAALSFSDAAVSKITEAKGQCISIEQLLSQNPKGSRTRILR.

This sequence belongs to the eukaryotic ribosomal protein eL18 family.

This is Large ribosomal subunit protein eL18 from Methanospirillum hungatei JF-1 (strain ATCC 27890 / DSM 864 / NBRC 100397 / JF-1).